Consider the following 544-residue polypeptide: Protein kinase dsk1 (544 aa).

Residues 81–516 enclose the Protein kinase domain; the sequence is YVVERKLGWG…AGYMSNSPWL (436 aa). ATP-binding positions include 87–95 and lysine 110; that span reads LGWGHFSTV. The Proton acceptor role is filled by aspartate 214. 2 disordered regions span residues 235–299 and 316–341; these read PATT…SSPF and ISLR…SLIL. Over residues 237–254 the composition is skewed to low complexity; it reads TTSSPTSNTSSSKTRNNT. Composition is skewed to polar residues over residues 281-299 and 327-337; these read KNPT…SSPF and HPNSPFSSGDN.

It belongs to the protein kinase superfamily. Ser/Thr protein kinase family. Phosphorylated on Ser residue(s).

Its subcellular location is the cytoplasm. It localises to the nucleus. The catalysed reaction is L-seryl-[protein] + ATP = O-phospho-L-seryl-[protein] + ADP + H(+). The enzyme catalyses L-threonyl-[protein] + ATP = O-phospho-L-threonyl-[protein] + ADP + H(+). Functionally, may play an important role in mitotic control by altering cellular location, degree of phosphorylation and kinase activity. Abundant expression accelerates the exit when cells are in M-phase and also delays the entry into mitosis when cells are in G2. Phosphorylates prp2 in vitro and so may have a role in co-ordinating pre-mRNA splicing with the progression of the cell division cycle. This Schizosaccharomyces pombe (strain 972 / ATCC 24843) (Fission yeast) protein is Protein kinase dsk1 (dsk1).